The sequence spans 41 residues: Large ribosomal subunit protein bL36 (41 aa).

Belongs to the bacterial ribosomal protein bL36 family.

The chain is Large ribosomal subunit protein bL36 from Rhodopseudomonas palustris (strain BisB5).